Reading from the N-terminus, the 2060-residue chain is Unconventional myosin-X (2060 aa).

N-acetylmethionine is present on Met1. The Myosin motor domain occupies 63–739; that stretch reads EGVDDMASLT…LEQKLEKRRE (677 aa). ATP contacts are provided by residues Asn104, Tyr113, 160–165, and Asn215; that span reads GAGKTE. The segment at 619–641 is actin-binding; it reads LHSLMATLSSSNPFFVRCIKPNT. 3 consecutive IQ domains span residues 742 to 771, 765 to 794, and 788 to 817; these read IDRA…GVVT, VLCG…AAIV, and LKKA…EKRE. Positions 814-882 are SAH; that stretch reads EKRELEERKR…LTRELEKQRE (69 aa). Residues 883–933 are a coiled coil; it reads NKQVEEILRLEKEIEDLQRMKEQQELSLTEASLQKLQQLRDEELRRLEDEA. A phosphoserine mark is found at Ser961, Ser964, and Ser967. 2 disordered regions span residues 971-1039 and 1064-1088; these read SELA…PYMN and SLHN…PSPD. The span at 991-1005 shows a compositional bias: acidic residues; sequence PEEEVDEGFEADDDA. Polar residues predominate over residues 1064–1083; the sequence is SLHNSSSGESTYCMPQNNGD. The residue at position 1160 (Thr1160) is a Phosphothreonine. PH domains lie at 1214 to 1312 and 1394 to 1499; these read EALK…QVHS and EFIV…NVTD. The 149-residue stretch at 1549–1697 folds into the MyTH4 domain; the sequence is LPYGDINLNL…PSRDEIEALI (149 aa). The FERM domain occupies 1702-2046; that stretch reads MTSTVYCHGG…AYISMIVKKR (345 aa).

It belongs to the TRAFAC class myosin-kinesin ATPase superfamily. Myosin family. Monomer, when in an inactive conformation in the cytosol. Homodimer in its active, membrane-bound conformation; antiparallel coiled coil-mediated dimer formation. Interacts with ECPAS. Interacts with DCC and ITGB5; the presence of DCC inhibits ITGB5 binding. Interacts with tubulin; ITGB5 or DCC binding inhibits tubulin binding. Interacts strongly with CALM3 and weakly with CALM, the CALM3 interaction is essential for function in filopodial extension and motility. Interacts with ITGB1, ITGB3 and ITGB5. Interacts with NEO1. Interacts with VASP.

It is found in the cytoplasm. It localises to the cytosol. The protein localises to the cell projection. The protein resides in the lamellipodium. Its subcellular location is the ruffle. It is found in the cytoskeleton. It localises to the filopodium tip. The protein localises to the cell cortex. The protein resides in the filopodium membrane. Its subcellular location is the cell membrane. Its function is as follows. Myosins are actin-based motor molecules with ATPase activity. Unconventional myosins serve in intracellular movements. MYO10 binds to actin filaments and actin bundles and functions as a plus end-directed motor. Moves with higher velocity and takes larger steps on actin bundles than on single actin filaments. The tail domain binds to membranous compartments containing phosphatidylinositol 3,4,5-trisphosphate or integrins, and mediates cargo transport along actin filaments. Regulates cell shape, cell spreading and cell adhesion. Stimulates the formation and elongation of filopodia. In hippocampal neurons it induces the formation of dendritic filopodia by trafficking the actin-remodeling protein VASP to the tips of filopodia, where it promotes actin elongation. Plays a role in formation of the podosome belt in osteoclasts. The protein is Unconventional myosin-X (Myo10) of Rattus norvegicus (Rat).